Consider the following 276-residue polypeptide: Phosducin-like protein 1 (276 aa).

4 positions are modified to phosphoserine: Ser-18, Ser-19, Ser-20, and Ser-42. A disordered region spans residues 18 to 74 (SSSEGEDNGDEGGDNKGASGKSRCSGLTIDTNPDATPAGGFRQQSSTNTGPKGVVKD). Positions 62-272 (SSTNTGPKGV…LIEHGIIVDR (211 aa)) constitute a Phosducin domain. The interval 153-276 (FGQVQQLTSH…GIIVDRALYN (124 aa)) is thioredoxin fold.

Belongs to the phosducin family. As to quaternary structure, forms a complex with the beta and gamma subunits of the GTP-binding proteins. Interacts with the CCT chaperonin complex.

In terms of biological role, functions as a co-chaperone for CCT in the assembly of heterotrimeric G protein complexes, facilitates the assembly of both Gbeta-Ggamma and RGS-Gbeta5 heterodimers. This chain is Phosducin-like protein 1, found in Drosophila melanogaster (Fruit fly).